Consider the following 175-residue polypeptide: Bifunctional protein PyrR (175 aa).

The short motif at 98 to 110 (VIIIDDVLYTGRT) is the PRPP-binding element.

This sequence belongs to the purine/pyrimidine phosphoribosyltransferase family. PyrR subfamily. In terms of assembly, homodimer and homohexamer; in equilibrium.

It catalyses the reaction UMP + diphosphate = 5-phospho-alpha-D-ribose 1-diphosphate + uracil. Functionally, regulates transcriptional attenuation of the pyrimidine nucleotide (pyr) operon by binding in a uridine-dependent manner to specific sites on pyr mRNA. This disrupts an antiterminator hairpin in the RNA and favors formation of a downstream transcription terminator, leading to a reduced expression of downstream genes. Its function is as follows. Also displays a weak uracil phosphoribosyltransferase activity which is not physiologically significant. This Staphylococcus aureus (strain bovine RF122 / ET3-1) protein is Bifunctional protein PyrR.